The chain runs to 142 residues: Hemoglobin subunit alpha-A (142 aa).

Residues valine 2–arginine 142 enclose the Globin domain. Histidine 59 serves as a coordination point for O2. A heme b-binding site is contributed by histidine 88.

This sequence belongs to the globin family. As to quaternary structure, heterotetramer of two alpha chains and two beta chains. As to expression, red blood cells.

In terms of biological role, involved in oxygen transport from the lung to the various peripheral tissues. In Columba livia (Rock dove), this protein is Hemoglobin subunit alpha-A (HBAA).